We begin with the raw amino-acid sequence, 228 residues long: Cytidylate kinase (228 aa).

An ATP-binding site is contributed by G12–T20.

Belongs to the cytidylate kinase family. Type 1 subfamily.

Its subcellular location is the cytoplasm. The enzyme catalyses CMP + ATP = CDP + ADP. It catalyses the reaction dCMP + ATP = dCDP + ADP. The protein is Cytidylate kinase of Pseudomonas entomophila (strain L48).